The primary structure comprises 446 residues: Mannan endo-1,6-alpha-mannosidase DCW1 (446 aa).

An N-terminal signal peptide occupies residues 1-18 (MRLVTLLSGLVSLVSVFG). Residues N31, N81, N106, N200, N222, N237, N262, N278, N285, N334, N391, and N397 are each glycosylated (N-linked (GlcNAc...) asparagine). The segment at 389 to 408 (PYNATNGGNSTGDGAAGTKP) is disordered. The GPI-anchor amidated serine moiety is linked to residue S422. A propeptide spans 423 to 446 (RAGAGIITAIIGISIIACALWLVY) (removed in mature form).

This sequence belongs to the glycosyl hydrolase 76 family.

It localises to the secreted. Its subcellular location is the cell wall. The protein localises to the cell membrane. It carries out the reaction Random hydrolysis of (1-&gt;6)-alpha-D-mannosidic linkages in unbranched (1-&gt;6)-mannans.. Its function is as follows. Required for normal synthesis of the cell wall. In Candida glabrata (strain ATCC 2001 / BCRC 20586 / JCM 3761 / NBRC 0622 / NRRL Y-65 / CBS 138) (Yeast), this protein is Mannan endo-1,6-alpha-mannosidase DCW1 (DCW1).